A 1928-amino-acid chain; its full sequence is Myosin-1 (1928 aa).

In terms of domain architecture, Myosin N-terminal SH3-like spans 8-71 (SSNMIVWIPD…RISDVFPVNP (64 aa)). The Myosin motor domain maps to 75–791 (DKVENMSELT…VLADLEKQKD (717 aa)). 180–187 (GESGAGKT) is a binding site for ATP. The interval 460–529 (IGLLDIAGFE…LQLTIDLIES (70 aa)) is actin-binding. A compositionally biased stretch (polar residues) spans 629-641 (SSSAGVEANISNQ). The interval 629–657 (SSSAGVEANISNQEVKKSARTSTFKTTSS) is disordered. In terms of domain architecture, IQ spans 794–823 (LNNIMIKLTATIRGYTVRKEITYHLQKLKK). Residues 856 to 1911 (SSNDMTRTKK…FWKSRYESTM (1056 aa)) are a coiled coil.

The protein belongs to the TRAFAC class myosin-kinesin ATPase superfamily. Myosin family.

Required for cell division. This is Myosin-1 (MYO1) from Saccharomyces cerevisiae (strain ATCC 204508 / S288c) (Baker's yeast).